The following is a 312-amino-acid chain: MTVNLEEYFRTTFEDKLLVKMPEREDDHLTPATRLLEKRREMSEVEQALGAQKEEFQMKMESLQQRREELERKEYQLRESLLKFDKFLKENDSKRARALKKAQEERDMRRAKDCEIARLKEDTSGLMKGRDKVQHRLEKYIIYQQYLEKVLENAEEFQEIREIIARYDTLTATHQDLLERELKNQEKYEKEKARLIKFTEEKNNEILNYNNQLANLQTKLEKTQSVAVKWESQWTHIKNTAAKKTLLLGRIKMATHNLFMLVNRHLGQTGMVDMTDKQLDKIQVFIQDLTQITLDIKRAENAITASGANTAG.

Coiled coils occupy residues Arg34–Glu121 and Ala172–Gln233.

It belongs to the CFAP73 family.

The protein is Coiled-coil domain-containing protein 42 homolog of Nematostella vectensis (Starlet sea anemone).